The sequence spans 349 residues: Quinolinate synthase (349 aa).

The iminosuccinate site is built by His52 and Ser69. Cys114 lines the [4Fe-4S] cluster pocket. Iminosuccinate is bound by residues 140-142 (YFN) and Ser157. Residue Cys201 coordinates [4Fe-4S] cluster. Iminosuccinate contacts are provided by residues 227–229 (HPE) and Thr255. Cys300 serves as a coordination point for [4Fe-4S] cluster.

Belongs to the quinolinate synthase family. Type 2 subfamily. [4Fe-4S] cluster serves as cofactor.

The protein localises to the cytoplasm. It catalyses the reaction iminosuccinate + dihydroxyacetone phosphate = quinolinate + phosphate + 2 H2O + H(+). The protein operates within cofactor biosynthesis; NAD(+) biosynthesis; quinolinate from iminoaspartate: step 1/1. In terms of biological role, catalyzes the condensation of iminoaspartate with dihydroxyacetone phosphate to form quinolinate. In Mycolicibacterium paratuberculosis (strain ATCC BAA-968 / K-10) (Mycobacterium paratuberculosis), this protein is Quinolinate synthase.